A 104-amino-acid chain; its full sequence is Large ribosomal subunit protein uL24 (104 aa).

Belongs to the universal ribosomal protein uL24 family. In terms of assembly, part of the 50S ribosomal subunit.

Functionally, one of two assembly initiator proteins, it binds directly to the 5'-end of the 23S rRNA, where it nucleates assembly of the 50S subunit. One of the proteins that surrounds the polypeptide exit tunnel on the outside of the subunit. The chain is Large ribosomal subunit protein uL24 from Pseudomonas fluorescens (strain ATCC BAA-477 / NRRL B-23932 / Pf-5).